The chain runs to 134 residues: Large-conductance mechanosensitive channel (134 aa).

The next 2 helical transmembrane spans lie at 16 to 36 (VIDL…VTAL) and 81 to 101 (GDFI…FIVV).

It belongs to the MscL family. As to quaternary structure, homopentamer.

It is found in the cell inner membrane. Channel that opens in response to stretch forces in the membrane lipid bilayer. May participate in the regulation of osmotic pressure changes within the cell. This chain is Large-conductance mechanosensitive channel, found in Stenotrophomonas maltophilia (strain K279a).